We begin with the raw amino-acid sequence, 398 residues long: Dihydrolipoyllysine-residue succinyltransferase component of 2-oxoglutarate dehydrogenase complex (398 aa).

Residues serine 2–asparagine 77 form the Lipoyl-binding domain. Lysine 43 bears the N6-lipoyllysine mark. In terms of domain architecture, Peripheral subunit-binding (PSBD) spans isoleucine 112–isoleucine 149. Active-site residues include histidine 369 and aspartate 373.

Belongs to the 2-oxoacid dehydrogenase family. As to quaternary structure, forms a 24-polypeptide structural core with octahedral symmetry. Part of the 2-oxoglutarate dehydrogenase (OGDH) complex composed of E1 (2-oxoglutarate dehydrogenase), E2 (dihydrolipoamide succinyltransferase) and E3 (dihydrolipoamide dehydrogenase); the complex contains multiple copies of the three enzymatic components (E1, E2 and E3). It depends on (R)-lipoate as a cofactor.

The enzyme catalyses N(6)-[(R)-dihydrolipoyl]-L-lysyl-[protein] + succinyl-CoA = N(6)-[(R)-S(8)-succinyldihydrolipoyl]-L-lysyl-[protein] + CoA. It participates in amino-acid degradation; L-lysine degradation via saccharopine pathway; glutaryl-CoA from L-lysine: step 6/6. Functionally, E2 component of the 2-oxoglutarate dehydrogenase (OGDH) complex which catalyzes the second step in the conversion of 2-oxoglutarate to succinyl-CoA and CO(2). The polypeptide is Dihydrolipoyllysine-residue succinyltransferase component of 2-oxoglutarate dehydrogenase complex (sucB) (Rickettsia typhi (strain ATCC VR-144 / Wilmington)).